Here is a 105-residue protein sequence, read N- to C-terminus: Large ribosomal subunit protein eL30 (105 aa).

This sequence belongs to the eukaryotic ribosomal protein eL30 family.

This Methanococcus vannielii (strain ATCC 35089 / DSM 1224 / JCM 13029 / OCM 148 / SB) protein is Large ribosomal subunit protein eL30 (rpl30e).